Reading from the N-terminus, the 387-residue chain is F-box protein At5g41490 (387 aa).

One can recognise an F-box domain in the interval 2 to 47 (ATMITNLRRDLIEEIISRVPLRSMKAVRLTCKSWNNISKSEIFTKM).

This Arabidopsis thaliana (Mouse-ear cress) protein is F-box protein At5g41490.